The primary structure comprises 157 residues: 2-C-methyl-D-erythritol 2,4-cyclodiphosphate synthase (157 aa).

A divalent metal cation-binding residues include Asp8 and His10. 4-CDP-2-C-methyl-D-erythritol 2-phosphate contacts are provided by residues 8–10 and 34–35; these read DVH and HS. His42 contributes to the a divalent metal cation binding site. Residues 56–58, 61–65, 100–106, 132–135, Phe139, and Arg142 each bind 4-CDP-2-C-methyl-D-erythritol 2-phosphate; these read DIG, FPDTD, AQAPKMA, and TTTE.

The protein belongs to the IspF family. In terms of assembly, homotrimer. A divalent metal cation is required as a cofactor.

The enzyme catalyses 4-CDP-2-C-methyl-D-erythritol 2-phosphate = 2-C-methyl-D-erythritol 2,4-cyclic diphosphate + CMP. It functions in the pathway isoprenoid biosynthesis; isopentenyl diphosphate biosynthesis via DXP pathway; isopentenyl diphosphate from 1-deoxy-D-xylulose 5-phosphate: step 4/6. In terms of biological role, involved in the biosynthesis of isopentenyl diphosphate (IPP) and dimethylallyl diphosphate (DMAPP), two major building blocks of isoprenoid compounds. Catalyzes the conversion of 4-diphosphocytidyl-2-C-methyl-D-erythritol 2-phosphate (CDP-ME2P) to 2-C-methyl-D-erythritol 2,4-cyclodiphosphate (ME-CPP) with a corresponding release of cytidine 5-monophosphate (CMP). The chain is 2-C-methyl-D-erythritol 2,4-cyclodiphosphate synthase from Pseudomonas aeruginosa (strain UCBPP-PA14).